We begin with the raw amino-acid sequence, 802 residues long: Leucine--tRNA ligase (802 aa).

The short motif at 40–51 (PYPSGAGLHVGH) is the 'HIGH' region element. Positions 576 to 580 (KMSKS) match the 'KMSKS' region motif. ATP is bound at residue K579.

It belongs to the class-I aminoacyl-tRNA synthetase family.

The protein resides in the cytoplasm. It catalyses the reaction tRNA(Leu) + L-leucine + ATP = L-leucyl-tRNA(Leu) + AMP + diphosphate. The sequence is that of Leucine--tRNA ligase from Bacillus cereus (strain B4264).